The sequence spans 354 residues: Uroporphyrinogen decarboxylase (354 aa).

Substrate contacts are provided by residues 27-31, D77, Y154, T209, and H327; that span reads RQAGR.

It belongs to the uroporphyrinogen decarboxylase family. Homodimer.

Its subcellular location is the cytoplasm. It carries out the reaction uroporphyrinogen III + 4 H(+) = coproporphyrinogen III + 4 CO2. It participates in porphyrin-containing compound metabolism; protoporphyrin-IX biosynthesis; coproporphyrinogen-III from 5-aminolevulinate: step 4/4. Functionally, catalyzes the decarboxylation of four acetate groups of uroporphyrinogen-III to yield coproporphyrinogen-III. The polypeptide is Uroporphyrinogen decarboxylase (Serratia proteamaculans (strain 568)).